Consider the following 148-residue polypeptide: Large ribosomal subunit protein uL15 (148 aa).

The interval 1 to 46 (MITIEDLKPTPGSNKKYKRLGRGQGSGKGKTAGKGHKGQKSRGTGK) is disordered. Over residues 31-45 (TAGKGHKGQKSRGTG) the composition is skewed to basic residues.

Belongs to the universal ribosomal protein uL15 family. As to quaternary structure, part of the 50S ribosomal subunit.

In terms of biological role, binds to the 23S rRNA. The sequence is that of Large ribosomal subunit protein uL15 from Fervidobacterium nodosum (strain ATCC 35602 / DSM 5306 / Rt17-B1).